Consider the following 125-residue polypeptide: Holo-[acyl-carrier-protein] synthase (125 aa).

Aspartate 8 and glutamate 57 together coordinate Mg(2+).

The protein belongs to the P-Pant transferase superfamily. AcpS family. Mg(2+) is required as a cofactor.

Its subcellular location is the cytoplasm. It carries out the reaction apo-[ACP] + CoA = holo-[ACP] + adenosine 3',5'-bisphosphate + H(+). Its function is as follows. Transfers the 4'-phosphopantetheine moiety from coenzyme A to a Ser of acyl-carrier-protein. This is Holo-[acyl-carrier-protein] synthase from Aromatoleum aromaticum (strain DSM 19018 / LMG 30748 / EbN1) (Azoarcus sp. (strain EbN1)).